The following is a 236-amino-acid chain: Potassium/proton antiporter CemA (236 aa).

The next 4 helical transmembrane spans lie at 12–32 (TVTS…TNHV), 114–134 (IANV…LLLG), 161–181 (IILF…EILI), and 196–216 (FIFL…KYWI).

This sequence belongs to the CemA family.

The protein localises to the plastid. Its subcellular location is the chloroplast inner membrane. It carries out the reaction K(+)(in) + H(+)(out) = K(+)(out) + H(+)(in). Contributes to K(+)/H(+) antiport activity by supporting proton efflux to control proton extrusion and homeostasis in chloroplasts in a light-dependent manner to modulate photosynthesis. Prevents excessive induction of non-photochemical quenching (NPQ) under continuous-light conditions. Indirectly promotes efficient inorganic carbon uptake into chloroplasts. The chain is Potassium/proton antiporter CemA from Chlorokybus atmophyticus (Soil alga).